Reading from the N-terminus, the 227-residue chain is 7-cyano-7-deazaguanine synthase (227 aa).

7-17 (LSGGLDSSTIL) is an ATP binding site. Zn(2+) is bound by residues cysteine 191, cysteine 199, cysteine 202, and cysteine 205.

The protein belongs to the QueC family. It depends on Zn(2+) as a cofactor.

It carries out the reaction 7-carboxy-7-deazaguanine + NH4(+) + ATP = 7-cyano-7-deazaguanine + ADP + phosphate + H2O + H(+). It participates in purine metabolism; 7-cyano-7-deazaguanine biosynthesis. In terms of biological role, catalyzes the ATP-dependent conversion of 7-carboxy-7-deazaguanine (CDG) to 7-cyano-7-deazaguanine (preQ(0)). This Trichormus variabilis (strain ATCC 29413 / PCC 7937) (Anabaena variabilis) protein is 7-cyano-7-deazaguanine synthase.